Here is a 364-residue protein sequence, read N- to C-terminus: UDP-3-O-acylglucosamine N-acyltransferase (364 aa).

The active-site Proton acceptor is the His258.

The protein belongs to the transferase hexapeptide repeat family. LpxD subfamily. Homotrimer.

The catalysed reaction is a UDP-3-O-[(3R)-3-hydroxyacyl]-alpha-D-glucosamine + a (3R)-hydroxyacyl-[ACP] = a UDP-2-N,3-O-bis[(3R)-3-hydroxyacyl]-alpha-D-glucosamine + holo-[ACP] + H(+). It functions in the pathway bacterial outer membrane biogenesis; LPS lipid A biosynthesis. Catalyzes the N-acylation of UDP-3-O-acylglucosamine using 3-hydroxyacyl-ACP as the acyl donor. Is involved in the biosynthesis of lipid A, a phosphorylated glycolipid that anchors the lipopolysaccharide to the outer membrane of the cell. This is UDP-3-O-acylglucosamine N-acyltransferase from Burkholderia orbicola (strain MC0-3).